A 354-amino-acid polypeptide reads, in one-letter code: MSLWVDKYRPKSLNALSHNEELTNFLKSLSDQPRDLPHLLLYGPNGTGKKTRCMALLESIFGPGVYRLKIDVRQFVTASNRKLELNVVSSPYHLEITPSDMGNNDRIVIQELLKEVAQMEQVDFQDSKDGLAHRYKCVIINEANSLTKDAQAALRRTMEKYSKNIRLIMVCDSMSPIIAPIKSRCLLIRCPAPSDSEISTILSDVVTNERIQLETKDILKRIAQASNGNLRVSLLMLESMALNNELALKSSSPIIKPDWIIVIHKLTRKIVKERSVNSLIECRAVLYDLLAHCIPANIILKELTFSLLDVETLNTTNKSSIIEYSSVFDERLSLGNKAIFHLEGFIAKVMCCLD.

ATP contacts are provided by residues Val-5, Ser-17, 43–51, and Arg-231; that span reads GPNGTGKKT.

The protein belongs to the activator 1 small subunits family. As to quaternary structure, replication factor C (RFC) is a heteropentamer of subunits RFC1, RFC2, RFC3, RFC4 and RFC5 and forms a complex with POL30/PCNA in the presence of ATP. Component of the RAD24-RFC complex which consists of RAD24, RFC2, RFC3, RFC4 and RFC5 and associates with the checkpoint clamp DDC1:MEC3:RAD17 complex. Component of the ELG1-RFC complex which consists of ELG1, RFC2, RFC3, RFC4 and RFC5. Component of the CTF18-RFC complex, which consists of CTF18, CTF8, DCC1, RFC2, RFC3, RFC4 and RFC5. RFC5 interacts with ECO1.

The protein localises to the nucleus. Functionally, component of ATP-dependent clamp loader (RFC and RFC-like) complexes for DNA clamps, such as the POL30/PCNA homotrimer and the checkpoint clamp DDC1:MEC3:RAD17 complex. During a clamp loading circle, the RFC:clamp complex binds to DNA and the recognition of the double-stranded/single-stranded junction stimulates ATP hydrolysis by RFC. The complex presumably provides bipartite ATP sites in which one subunit supplies a catalytic site for hydrolysis of ATP bound to the neighboring subunit. Dissociation of RFC from the clamp leaves the clamp encircling DNA. Component of the replication factor C (RFC or activator 1) complex which loads POL30/PCNA and acts during elongation of primed DNA templates by DNA polymerase delta and epsilon. RFC has an essential but redundant activity in sister chromatid cohesion establishment. Component of the RFC-like complex CTF18-RFC which is required for efficient establishment of chromosome cohesion during S-phase and may load or unload POL30/PCNA. Component of the RFC-like RAD24-RFC complex which loads the checkpoint clamp DDC1:MEC3:RAD17 complex and is involved in DNA repair pathways. Component of the RFC-like ELG1-RFC complex which appears to have a role in DNA replication, replication fork re-start, recombination and repair. The polypeptide is Replication factor C subunit 5 (RFC5) (Saccharomyces cerevisiae (strain ATCC 204508 / S288c) (Baker's yeast)).